We begin with the raw amino-acid sequence, 115 residues long: Large ribosomal subunit protein bL19 (115 aa).

The protein belongs to the bacterial ribosomal protein bL19 family.

This protein is located at the 30S-50S ribosomal subunit interface and may play a role in the structure and function of the aminoacyl-tRNA binding site. The protein is Large ribosomal subunit protein bL19 of Buchnera aphidicola subsp. Cinara cedri (strain Cc).